The sequence spans 487 residues: Glutamyl-tRNA(Gln) amidotransferase subunit A (487 aa).

Active-site charge relay system residues include K74 and S149. S173 serves as the catalytic Acyl-ester intermediate.

This sequence belongs to the amidase family. GatA subfamily. Heterotrimer of A, B and C subunits.

The catalysed reaction is L-glutamyl-tRNA(Gln) + L-glutamine + ATP + H2O = L-glutaminyl-tRNA(Gln) + L-glutamate + ADP + phosphate + H(+). Allows the formation of correctly charged Gln-tRNA(Gln) through the transamidation of misacylated Glu-tRNA(Gln) in organisms which lack glutaminyl-tRNA synthetase. The reaction takes place in the presence of glutamine and ATP through an activated gamma-phospho-Glu-tRNA(Gln). The polypeptide is Glutamyl-tRNA(Gln) amidotransferase subunit A (Synechococcus sp. (strain WH7803)).